The chain runs to 453 residues: Oocyte zinc finger protein XlCOF6 (453 aa).

14 consecutive C2H2-type zinc fingers follow at residues 6-29 (FICSKCGETFTVNSHLLTHLCGKH), 67-89 (FTCTECGKSFSERDNLKCHHKTH), 95-117 (FTCMECGKGFSVKSSLKHHYKAH), 123-145 (VRCTECGKEFTSKYYLNVHKRLH), 151-173 (FTCTQCGKCFSDKSALKYHHKTH), 179-201 (FACTECGKSFTEKSILQKHQRTH), 207-229 (FTCTECGKSYSAMSTLECHRRTH), 235-257 (FTCTECGKSFTEKSILRKHHKTH), 263-285 (FTCTECGKSCTEKSILRKHQITH), 291-313 (FTCTECGKCFSDKTALKYHHKTH), 319-341 (FACTECGKSFTDKSILRNHQRTH), 375-397 (FTCTECGKSFTEKSILRKHHKTH), 403-425 (FTCTECGKSFTHKSILQKHQRTH), and 431-453 (FTCTECGKCFSDKTAIKYHRITH).

This sequence belongs to the krueppel C2H2-type zinc-finger protein family.

The protein localises to the nucleus. Functionally, may be involved in transcriptional regulation. This Xenopus laevis (African clawed frog) protein is Oocyte zinc finger protein XlCOF6.